Consider the following 284-residue polypeptide: Bifunctional protein FolD (284 aa).

NADP(+)-binding positions include 166 to 168 (GAS) and Ile-232.

Belongs to the tetrahydrofolate dehydrogenase/cyclohydrolase family. As to quaternary structure, homodimer.

The catalysed reaction is (6R)-5,10-methylene-5,6,7,8-tetrahydrofolate + NADP(+) = (6R)-5,10-methenyltetrahydrofolate + NADPH. It catalyses the reaction (6R)-5,10-methenyltetrahydrofolate + H2O = (6R)-10-formyltetrahydrofolate + H(+). The protein operates within one-carbon metabolism; tetrahydrofolate interconversion. In terms of biological role, catalyzes the oxidation of 5,10-methylenetetrahydrofolate to 5,10-methenyltetrahydrofolate and then the hydrolysis of 5,10-methenyltetrahydrofolate to 10-formyltetrahydrofolate. In Pseudomonas aeruginosa (strain LESB58), this protein is Bifunctional protein FolD.